Reading from the N-terminus, the 644-residue chain is 1-deoxy-D-xylulose-5-phosphate synthase (644 aa).

Thiamine diphosphate-binding positions include H78 and 120–122; that span reads GHA. Position 150 (D150) interacts with Mg(2+). Residues 151-152, N179, and E374 contribute to the thiamine diphosphate site; that span reads AA. Residue N179 participates in Mg(2+) binding.

The protein belongs to the transketolase family. DXPS subfamily. In terms of assembly, homodimer. Requires Mg(2+) as cofactor. Thiamine diphosphate serves as cofactor.

The catalysed reaction is D-glyceraldehyde 3-phosphate + pyruvate + H(+) = 1-deoxy-D-xylulose 5-phosphate + CO2. It functions in the pathway metabolic intermediate biosynthesis; 1-deoxy-D-xylulose 5-phosphate biosynthesis; 1-deoxy-D-xylulose 5-phosphate from D-glyceraldehyde 3-phosphate and pyruvate: step 1/1. Catalyzes the acyloin condensation reaction between C atoms 2 and 3 of pyruvate and glyceraldehyde 3-phosphate to yield 1-deoxy-D-xylulose-5-phosphate (DXP). The polypeptide is 1-deoxy-D-xylulose-5-phosphate synthase (Chlamydia pneumoniae (Chlamydophila pneumoniae)).